Reading from the N-terminus, the 342-residue chain is N-acetyl-gamma-glutamyl-phosphate reductase (342 aa).

C146 is an active-site residue.

It belongs to the NAGSA dehydrogenase family. Type 1 subfamily.

Its subcellular location is the cytoplasm. The enzyme catalyses N-acetyl-L-glutamate 5-semialdehyde + phosphate + NADP(+) = N-acetyl-L-glutamyl 5-phosphate + NADPH + H(+). The protein operates within amino-acid biosynthesis; L-arginine biosynthesis; N(2)-acetyl-L-ornithine from L-glutamate: step 3/4. In terms of biological role, catalyzes the NADPH-dependent reduction of N-acetyl-5-glutamyl phosphate to yield N-acetyl-L-glutamate 5-semialdehyde. The chain is N-acetyl-gamma-glutamyl-phosphate reductase from Streptomyces avermitilis (strain ATCC 31267 / DSM 46492 / JCM 5070 / NBRC 14893 / NCIMB 12804 / NRRL 8165 / MA-4680).